The primary structure comprises 290 residues: 4-hydroxy-tetrahydrodipicolinate synthase (290 aa).

Threonine 44 lines the pyruvate pocket. Tyrosine 131 serves as the catalytic Proton donor/acceptor. Lysine 159 (schiff-base intermediate with substrate) is an active-site residue. A pyruvate-binding site is contributed by isoleucine 201.

The protein belongs to the DapA family. In terms of assembly, homotetramer; dimer of dimers.

The protein localises to the cytoplasm. The catalysed reaction is L-aspartate 4-semialdehyde + pyruvate = (2S,4S)-4-hydroxy-2,3,4,5-tetrahydrodipicolinate + H2O + H(+). The protein operates within amino-acid biosynthesis; L-lysine biosynthesis via DAP pathway; (S)-tetrahydrodipicolinate from L-aspartate: step 3/4. In terms of biological role, catalyzes the condensation of (S)-aspartate-beta-semialdehyde [(S)-ASA] and pyruvate to 4-hydroxy-tetrahydrodipicolinate (HTPA). The sequence is that of 4-hydroxy-tetrahydrodipicolinate synthase from Jannaschia sp. (strain CCS1).